We begin with the raw amino-acid sequence, 397 residues long: Acetate kinase 2 (397 aa).

N8 contributes to the Mg(2+) binding site. K15 is a binding site for ATP. Residue R89 participates in substrate binding. The active-site Proton donor/acceptor is the D146. ATP is bound by residues 206–210 (HLGNG), 281–283 (DLR), and 329–333 (GIGEN). E382 contacts Mg(2+).

It belongs to the acetokinase family. Homodimer. It depends on Mg(2+) as a cofactor. Mn(2+) serves as cofactor.

It localises to the cytoplasm. The enzyme catalyses acetate + ATP = acetyl phosphate + ADP. The protein operates within metabolic intermediate biosynthesis; acetyl-CoA biosynthesis; acetyl-CoA from acetate: step 1/2. In terms of biological role, catalyzes the formation of acetyl phosphate from acetate and ATP. Can also catalyze the reverse reaction. The sequence is that of Acetate kinase 2 from Listeria monocytogenes serotype 4b (strain F2365).